A 34-amino-acid polypeptide reads, in one-letter code: MCIPCFTTNPNMAAKCNACCGSRRGSCRGPQCIC.

4 disulfide bridges follow: Cys-2/Cys-19, Cys-5/Cys-27, Cys-16/Cys-32, and Cys-20/Cys-34.

This sequence belongs to the short scorpion toxin superfamily. Chloride channel inhibitor family. As to expression, expressed by the venom gland.

The protein resides in the secreted. Functionally, toxin with unknown function in healthy organisms. On glioma cells, interacts with chloride channels (probably ClC-3/CLCN3) and MMP2 at the surface of glioma cells. This complex is then internalized via caveolae, thus inhibiting the chloride channels necessary for cell shrinkage and tumor propagation. Inhibits migration and invasion of U87 glioma cells expressing CLCN3/ClC-3 voltage-gated chloride channels. The polypeptide is Chlorotoxin-like peptide AaCtx (Androctonus australis (Sahara scorpion)).